The primary structure comprises 658 residues: Cysteine-rich receptor-like protein kinase 36 (658 aa).

A signal peptide spans 1-26 (MERSNLFHIPCFLLLFLLFNINGVHT). Gnk2-homologous domains follow at residues 27-128 (TFVC…NIHR) and 139-246 (NVPH…DYRF). Over 27 to 281 (TFVCGDEDFS…KKGRMFQPWS (255 aa)) the chain is Extracellular. N-linked (GlcNAc...) asparagine glycosylation is found at Asn-38, Asn-64, Asn-116, Asn-150, and Asn-163. The chain crosses the membrane as a helical span at residues 282–302 (VVVVVFPTGINLAVFVAFVLA). At 303–658 (YRRMRRRIYT…EVSITVLYPR (356 aa)) the chain is on the cytoplasmic side. The Protein kinase domain maps to 340–612 (FSLENKLGQG…ITWLARDGTF (273 aa)). ATP is bound by residues 346-354 (LGQGGFGSV) and Lys-368. The residue at position 413 (Tyr-413) is a Phosphotyrosine. Asp-465 (proton acceptor) is an active-site residue. Phosphoserine is present on Ser-469. Thr-505 bears the Phosphothreonine mark. Tyr-513 carries the post-translational modification Phosphotyrosine.

Belongs to the protein kinase superfamily. Ser/Thr protein kinase family. CRK subfamily. As to quaternary structure, interacts with CRK45. Post-translationally, autophosphorylated.

Its subcellular location is the cell membrane. It carries out the reaction L-seryl-[protein] + ATP = O-phospho-L-seryl-[protein] + ADP + H(+). The enzyme catalyses L-threonyl-[protein] + ATP = O-phospho-L-threonyl-[protein] + ADP + H(+). Forms a complex with CRK45 that may negatively control abscisic acid (ABA) and osmotic stress signal transduction. Can phosphorylate CRK45 in vitro. In Arabidopsis thaliana (Mouse-ear cress), this protein is Cysteine-rich receptor-like protein kinase 36.